Reading from the N-terminus, the 459-residue chain is Exodeoxyribonuclease 7 large subunit (459 aa).

The protein belongs to the XseA family. Heterooligomer composed of large and small subunits.

It localises to the cytoplasm. The enzyme catalyses Exonucleolytic cleavage in either 5'- to 3'- or 3'- to 5'-direction to yield nucleoside 5'-phosphates.. Its function is as follows. Bidirectionally degrades single-stranded DNA into large acid-insoluble oligonucleotides, which are then degraded further into small acid-soluble oligonucleotides. The chain is Exodeoxyribonuclease 7 large subunit from Yersinia pestis bv. Antiqua (strain Antiqua).